A 368-amino-acid chain; its full sequence is Endophilin-A2 (368 aa).

Residues 1-21 (MSVAGLKKQFYKASQLVSEKV) form a membrane-binding amphipathic helix region. Residues 18–249 (SEKVGGAEGT…LKRRVREASS (232 aa)) form the BAR domain. The required for dimerization upon membrane association stretch occupies residues 60–87 (PNPASRAKLTMLNTVSKIRGQVKNPGYP). Residues 180–250 (DEELRQALEK…KRRVREASSR (71 aa)) are a coiled coil. The tract at residues 218-254 (LVDAQLDYHRQAVQILEELADKLKRRVREASSRPKRE) is interaction with ARC. The segment at 244 to 307 (VREASSRPKR…MPSKSMPPLD (64 aa)) is disordered. The segment covering 245–263 (REASSRPKREFKPRPREPF) has biased composition (basic and acidic residues). Phosphoserine occurs at positions 288 and 292. The 60-residue stretch at 306-365 (LDQPSCKALYDFEPENDGELGFREGDLITLTNQIDENWYEGMLHGQSGFFPLSYVQVLVP) folds into the SH3 domain. The residue at position 315 (Y315) is a Phosphotyrosine.

It belongs to the endophilin family. In terms of assembly, interacts with ARC, SYNJ1 and DNM1. Interacts with PDCD6IP. Interacts with BIN2.

It is found in the cytoplasm. The protein localises to the early endosome membrane. It localises to the cell projection. The protein resides in the podosome. Its function is as follows. Implicated in endocytosis. May recruit other proteins to membranes with high curvature. The chain is Endophilin-A2 (Sh3gl1) from Mus musculus (Mouse).